The sequence spans 109 residues: Large ribosomal subunit protein uL22 (109 aa).

It belongs to the universal ribosomal protein uL22 family. Part of the 50S ribosomal subunit.

In terms of biological role, this protein binds specifically to 23S rRNA; its binding is stimulated by other ribosomal proteins, e.g. L4, L17, and L20. It is important during the early stages of 50S assembly. It makes multiple contacts with different domains of the 23S rRNA in the assembled 50S subunit and ribosome. Its function is as follows. The globular domain of the protein is located near the polypeptide exit tunnel on the outside of the subunit, while an extended beta-hairpin is found that lines the wall of the exit tunnel in the center of the 70S ribosome. This is Large ribosomal subunit protein uL22 from Paraburkholderia xenovorans (strain LB400).